The chain runs to 705 residues: Polyribonucleotide nucleotidyltransferase (705 aa).

Mg(2+) contacts are provided by Asp-486 and Asp-492. One can recognise a KH domain in the interval 553 to 612; it reads PRIYTMKINPEKIKDVIGKGGSVIRALTDETGTTIEIEDDGTIKIAATDGDKAKHAIRRI. In terms of domain architecture, S1 motif spans 622–690; the sequence is GRIYAGKVTR…RQGRIRLSIK (69 aa).

It belongs to the polyribonucleotide nucleotidyltransferase family. As to quaternary structure, component of the RNA degradosome, which is a multiprotein complex involved in RNA processing and mRNA degradation. Mg(2+) is required as a cofactor.

The protein localises to the cytoplasm. The enzyme catalyses RNA(n+1) + phosphate = RNA(n) + a ribonucleoside 5'-diphosphate. In terms of biological role, involved in mRNA degradation. Catalyzes the phosphorolysis of single-stranded polyribonucleotides processively in the 3'- to 5'-direction. The polypeptide is Polyribonucleotide nucleotidyltransferase (Yersinia pestis bv. Antiqua (strain Nepal516)).